A 550-amino-acid chain; its full sequence is Methionine--tRNA ligase (550 aa).

A 'HIGH' region motif is present at residues 13–23; that stretch reads PYANGPLHFGH. The Zn(2+) site is built by Cys-145, Cys-148, Cys-158, and Cys-161. Residues 331–335 carry the 'KMSKS' region motif; the sequence is QFSKS. ATP is bound at residue Lys-334.

The protein belongs to the class-I aminoacyl-tRNA synthetase family. MetG type 1 subfamily. Monomer. Zn(2+) is required as a cofactor.

It is found in the cytoplasm. The catalysed reaction is tRNA(Met) + L-methionine + ATP = L-methionyl-tRNA(Met) + AMP + diphosphate. Its function is as follows. Is required not only for elongation of protein synthesis but also for the initiation of all mRNA translation through initiator tRNA(fMet) aminoacylation. The chain is Methionine--tRNA ligase from Chlamydia trachomatis serovar A (strain ATCC VR-571B / DSM 19440 / HAR-13).